Consider the following 901-residue polypeptide: Protein translocase subunit SecA (901 aa).

ATP-binding positions include Q87, 105–109 (GEGKT), and D512. The segment at 853–901 (QMQQLSHQTDENEAAEAIAAQTGDRKVGRNDPCPCGSGKKYKSCHGRLS) is disordered. Zn(2+) contacts are provided by C885, C887, C896, and H897. Basic residues predominate over residues 891–901 (KKYKSCHGRLS).

It belongs to the SecA family. Monomer and homodimer. Part of the essential Sec protein translocation apparatus which comprises SecA, SecYEG and auxiliary proteins SecDF-YajC and YidC. Zn(2+) serves as cofactor.

It is found in the cell inner membrane. Its subcellular location is the cytoplasm. The catalysed reaction is ATP + H2O + cellular proteinSide 1 = ADP + phosphate + cellular proteinSide 2.. Part of the Sec protein translocase complex. Interacts with the SecYEG preprotein conducting channel. Has a central role in coupling the hydrolysis of ATP to the transfer of proteins into and across the cell membrane, serving both as a receptor for the preprotein-SecB complex and as an ATP-driven molecular motor driving the stepwise translocation of polypeptide chains across the membrane. The polypeptide is Protein translocase subunit SecA (Enterobacter sp. (strain 638)).